Here is a 2346-residue protein sequence, read N- to C-terminus: Nucleoprotein TPR (2346 aa).

Coiled-coil stretches lie at residues 38–190 (DEYC…HKEI), 217–366 (QLQS…NLES), 395–493 (YAKS…SRQV), and 565–596 (KMLL…NNTV). The disordered stretch occupies residues 622–649 (VDLDDSNLEPNDSALDTSEQPAANFEES). A compositionally biased stretch (polar residues) spans 629 to 642 (LEPNDSALDTSEQP). Coiled-coil stretches lie at residues 643-1158 (AANF…IEAL) and 1196-1247 (EEGR…DELN). Positions 1187–1655 (LNASGLTAAE…SPRTANVKPM (469 aa)) are interacts with Mad1. Phosphothreonine is present on residues Thr1259, Thr1302, Thr1338, and Thr1390. 2 coiled-coil regions span residues 1281 to 1536 (TDSN…KRTE) and 1579 to 1627 (SYDE…GSQQ). 2 stretches are compositionally biased toward polar residues: residues 1621–1649 (RQLG…SPRT) and 1657–1667 (GSATVQQSATV). 3 disordered regions span residues 1621-1677 (RQLG…ETPL), 1695-1768 (PTSQ…YMPS), and 1821-2346 (SPRV…GRFP). A compositionally biased stretch (low complexity) spans 1702–1722 (AGSSTSTSSSSSSSSTSTTSA). The segment covering 1738-1747 (PQQQVHTTGS) has biased composition (polar residues). Composition is skewed to low complexity over residues 1752 to 1761 (SMASSSPTSS) and 1827 to 1878 (SSSS…PSSS). Positions 1879–1891 (NVTTTQAGCSSQG) are enriched in polar residues. A compositionally biased stretch (acidic residues) spans 1953-2023 (QEDDIQVVDS…QDNNEVDIEV (71 aa)). A compositionally biased stretch (polar residues) spans 2028-2080 (MQAQEESQSLDNQAIATASASTQENNQSQAITSGSGESSNPVTLPQAEASNWK). Positions 2082–2091 (AAASTSTAAA) are enriched in low complexity. Polar residues-rich tracts occupy residues 2097–2110 (SVEI…SNFC) and 2142–2159 (GAAS…GESS). Over residues 2165-2184 (KAADDGGDHADGTDNAREAD) the composition is skewed to basic and acidic residues. Composition is skewed to polar residues over residues 2193-2223 (ATGQ…NQAN) and 2302-2322 (RDTS…NRFA). Positions 2323–2332 (QRTRNRRPIR) are enriched in basic residues.

Belongs to the TPR family. Part of the nuclear pore complex (NPC). Associates with male-specific lethal (MSL) histone acetyltransferase complex. Interacts with Mad2; the interaction is required for efficient recruitment of Mad2 to unattached kinetochore and occurs in a microtubule-independent manner. Interacts with Mad1 (N-terminus). Interacts with Chro, east and Asator; the interaction is part of a macromolecular complex forming the spindle matrix during mitosis. Interacts with Nup98. In males, interacts with histone acetyltransferase mof. In terms of processing, mps1-mediated phosphorylation disrupts interaction with Mad1 during mitosis. As to expression, expressed in salivary glands, fat body, tracheal tube, esophageal tube and anterior ejaculatory duct (at protein level).

It is found in the nucleus. The protein resides in the nucleus matrix. Its subcellular location is the nucleus lamina. It localises to the nucleus envelope. The protein localises to the nucleus membrane. It is found in the nuclear pore complex. The protein resides in the cytoplasm. Its subcellular location is the cytoskeleton. It localises to the spindle. The protein localises to the chromosome. It is found in the centromere. The protein resides in the kinetochore. Its subcellular location is the midbody. Functionally, component of the nuclear pore complex (NPC), a complex required for the trafficking across the nuclear envelope. Functions as a scaffolding element in the nuclear phase of the NPC. Plays a role in chromosomal organization and gene expression regulation; stimulates transcription by promoting the formation of an open chromatin environment. Binds chromatin to nucleoporin-associated regions (NARs) that define transcriptionally active regions of the genome. Associates with extended chromosomal regions that alternate between domains of high density binding with those of low occupancy. Preferentially binds to NARs of the male X chromosome. In males, together with Nup153, required for the localization of the male-specific lethal (MSL) histone acetyltransferase complex to the X chromosome and therefore for the transcription of dosage compensation genes. In males, restrains dosage-compensated expression at the level of nascent transcription probably by interacting with the MSL complex and by modulating RNA Polymerase II phosphorylation status and activity. During mitosis forms a gel-like spindle matrix complex together with Skeletor (Skel), Chro, east, and Asator embedding the microtubule spindle apparatus. During interphase localizes Mad1 to the nuclear pore complex and thereby might act as a scaffold to assemble the Mad1-C-Mad2 complex, a heterotetramer that catalyzes the structural conversion of open-Mad2 (O-Mad2) into closed-Mad2 (C-Mad2) which is essential for spindle-assembly checkpoint (SAC). During the metaphase-anaphase transition and before chromosome congression, is phosphorylated by Msp-1; this modification releases Mad1 from the nuclear pore complex and thereby promotes assembly of SAC ensuring a timely and effective recruitment of spindle checkpoint proteins like Mad1, Mad2 and Mps1 to unattached kinetochores (KT). In testes, has a role in stem cell asymmetric division and maintenance via regulation of mitotic spindle assembly checkpoint (SAC) complex. This chain is Nucleoprotein TPR, found in Drosophila melanogaster (Fruit fly).